The chain runs to 163 residues: Nucleotide-binding protein MAP_4063c (163 aa).

This sequence belongs to the YajQ family.

In terms of biological role, nucleotide-binding protein. The polypeptide is Nucleotide-binding protein MAP_4063c (Mycolicibacterium paratuberculosis (strain ATCC BAA-968 / K-10) (Mycobacterium paratuberculosis)).